A 549-amino-acid chain; its full sequence is Glucose-6-phosphate isomerase (549 aa).

The active-site Proton donor is the glutamate 353. Active-site residues include histidine 384 and lysine 510. A disordered region spans residues 523–549 (AEPPAAQSDSSTDALVRRYRSERGRTA). Residues 537–549 (LVRRYRSERGRTA) show a composition bias toward basic and acidic residues.

This sequence belongs to the GPI family.

Its subcellular location is the cytoplasm. It catalyses the reaction alpha-D-glucose 6-phosphate = beta-D-fructose 6-phosphate. It functions in the pathway carbohydrate biosynthesis; gluconeogenesis. Its pathway is carbohydrate degradation; glycolysis; D-glyceraldehyde 3-phosphate and glycerone phosphate from D-glucose: step 2/4. Functionally, catalyzes the reversible isomerization of glucose-6-phosphate to fructose-6-phosphate. The chain is Glucose-6-phosphate isomerase from Mycolicibacterium gilvum (strain PYR-GCK) (Mycobacterium gilvum (strain PYR-GCK)).